Reading from the N-terminus, the 390-residue chain is Flap endonuclease 1 (390 aa).

An N-domain region spans residues 1-111 (MGIKGLAKLL…GELLKRREKR (111 aa)). D34 contributes to the Mg(2+) binding site. DNA-binding residues include R47 and R77. Positions 93, 165, 167, 186, and 188 each coordinate Mg(2+). Residues 129–260 (EQDKQSKRLV…KTALKLIREH (132 aa)) form an I-domain region. E165 provides a ligand contact to DNA. Residues G238 and D240 each contribute to the DNA site. D240 provides a ligand contact to Mg(2+). The tract at residues 342–390 (KPQSRMDSFFKVKANPEGDKKKAEKRKAELAASRGKGKKGKGGGGFKKK) is disordered. The interval 343–351 (PQSRMDSFF) is interaction with PCNA. Over residues 349–370 (SFFKVKANPEGDKKKAEKRKAE) the composition is skewed to basic and acidic residues. A compositionally biased stretch (basic residues) spans 376–390 (GKGKKGKGGGGFKKK).

The protein belongs to the XPG/RAD2 endonuclease family. FEN1 subfamily. In terms of assembly, interacts with PCNA. Three molecules of FEN1 bind to one PCNA trimer with each molecule binding to one PCNA monomer. PCNA stimulates the nuclease activity without altering cleavage specificity. The cofactor is Mg(2+). In terms of processing, phosphorylated. Phosphorylation upon DNA damage induces relocalization to the nuclear plasma.

Its subcellular location is the nucleus. The protein resides in the nucleolus. It is found in the nucleoplasm. It localises to the mitochondrion. Structure-specific nuclease with 5'-flap endonuclease and 5'-3' exonuclease activities involved in DNA replication and repair. During DNA replication, cleaves the 5'-overhanging flap structure that is generated by displacement synthesis when DNA polymerase encounters the 5'-end of a downstream Okazaki fragment. It enters the flap from the 5'-end and then tracks to cleave the flap base, leaving a nick for ligation. Also involved in the long patch base excision repair (LP-BER) pathway, by cleaving within the apurinic/apyrimidinic (AP) site-terminated flap. Acts as a genome stabilization factor that prevents flaps from equilibrating into structures that lead to duplications and deletions. Also possesses 5'-3' exonuclease activity on nicked or gapped double-stranded DNA, and exhibits RNase H activity. Also involved in replication and repair of rDNA and in repairing mitochondrial DNA. The sequence is that of Flap endonuclease 1 from Thalassiosira pseudonana (Marine diatom).